The sequence spans 256 residues: Tryptophan synthase alpha chain (256 aa).

Catalysis depends on proton acceptor residues glutamate 44 and aspartate 55.

The protein belongs to the TrpA family. In terms of assembly, tetramer of two alpha and two beta chains.

It carries out the reaction (1S,2R)-1-C-(indol-3-yl)glycerol 3-phosphate + L-serine = D-glyceraldehyde 3-phosphate + L-tryptophan + H2O. It functions in the pathway amino-acid biosynthesis; L-tryptophan biosynthesis; L-tryptophan from chorismate: step 5/5. The alpha subunit is responsible for the aldol cleavage of indoleglycerol phosphate to indole and glyceraldehyde 3-phosphate. The chain is Tryptophan synthase alpha chain from Coxiella burnetii (strain CbuK_Q154) (Coxiella burnetii (strain Q154)).